Consider the following 238-residue polypeptide: Cysteine-rich venom protein (238 aa).

Residues 1–19 (MIAFIVLLSLAAVLQQSSG) form the signal peptide. Residues 38 to 164 (VDKHNALRRS…STKYLYVCQY (127 aa)) form the SCP domain. Cystine bridges form between Cys75/Cys153, Cys92/Cys165, Cys148/Cys162, Cys184/Cys191, Cys187/Cys196, Cys200/Cys233, Cys209/Cys227, and Cys218/Cys231. In terms of domain architecture, ShKT spans 200–233 (CKYEDAFTNCKALAKKTKCKTEWIKSKCPATCFC).

This sequence belongs to the CRISP family. In terms of tissue distribution, expressed by the venom gland.

It is found in the secreted. Functionally, blocks contraction of smooth muscle elicited by high potassium-induced depolarization, but does not block caffeine-stimulated contraction. May target voltage-gated calcium channels on smooth muscle. The protein is Cysteine-rich venom protein of Austrelaps superbus (Lowland copperhead snake).